A 304-amino-acid chain; its full sequence is Mycothiol acetyltransferase (304 aa).

Position 36 (E36) interacts with 1D-myo-inositol 2-(L-cysteinylamino)-2-deoxy-alpha-D-glucopyranoside. 73–75 (LFV) is a binding site for acetyl-CoA. In terms of domain architecture, N-acetyltransferase spans 145–304 (LEIQTYTESV…EEHCVWAKSD (160 aa)). E179, K225, and E236 together coordinate 1D-myo-inositol 2-(L-cysteinylamino)-2-deoxy-alpha-D-glucopyranoside. Residue 240-242 (VGL) coordinates acetyl-CoA. Residue Y274 participates in 1D-myo-inositol 2-(L-cysteinylamino)-2-deoxy-alpha-D-glucopyranoside binding. Residue 279–284 (NDPAVK) coordinates acetyl-CoA.

The protein belongs to the acetyltransferase family. MshD subfamily. Monomer.

It carries out the reaction 1D-myo-inositol 2-(L-cysteinylamino)-2-deoxy-alpha-D-glucopyranoside + acetyl-CoA = mycothiol + CoA + H(+). Catalyzes the transfer of acetyl from acetyl-CoA to desacetylmycothiol (Cys-GlcN-Ins) to form mycothiol. The chain is Mycothiol acetyltransferase from Corynebacterium aurimucosum (strain ATCC 700975 / DSM 44827 / CIP 107346 / CN-1) (Corynebacterium nigricans).